A 1165-amino-acid polypeptide reads, in one-letter code: Phenyloxazoline synthase MbtB (1165 aa).

The Carrier 1 domain maps to 5-78 (PARSEDIREE…AWAQLVTAGR (74 aa)). Ser39 is modified (O-(pantetheine 4'-phosphoryl)serine). Residues 77 to 100 (GRQDTDSAAPPADSSGDPSGETEP) form a disordered region. A condensation/cyclization region spans residues 97-393 (ETEPFALAPM…SSLLLDVDLV (297 aa)). The segment at 578 to 973 (SYAQLRDQAL…RVPGVRTAVA (396 aa)) is adenylation. Residues 1055–1131 (AASTPLEGAL…ALAAVLRAAE (77 aa)) enclose the Carrier 2 domain. Ser1090 is subject to O-(pantetheine 4'-phosphoryl)serine.

Belongs to the ATP-dependent AMP-binding enzyme family. MbtB subfamily. The cofactor is pantetheine 4'-phosphate. In terms of processing, 4'-phosphopantetheine is transferred from CoA to a specific serine in each of the two carrier protein domains, leading to their activation from apo to holo forms.

Its pathway is siderophore biosynthesis; mycobactin biosynthesis. Involved in the initial steps of the mycobactin biosynthetic pathway. Putatively couples activated salicylic acid with serine or threonine and cyclizes this precursor to the hydroxyphenyloxazoline ring system present in this class of siderophores. The chain is Phenyloxazoline synthase MbtB (mbtB) from Mycolicibacterium paratuberculosis (strain ATCC BAA-968 / K-10) (Mycobacterium paratuberculosis).